Consider the following 382-residue polypeptide: ATP phosphoribosyltransferase regulatory subunit (382 aa).

This sequence belongs to the class-II aminoacyl-tRNA synthetase family. HisZ subfamily. In terms of assembly, heteromultimer composed of HisG and HisZ subunits.

The protein resides in the cytoplasm. The protein operates within amino-acid biosynthesis; L-histidine biosynthesis; L-histidine from 5-phospho-alpha-D-ribose 1-diphosphate: step 1/9. Required for the first step of histidine biosynthesis. May allow the feedback regulation of ATP phosphoribosyltransferase activity by histidine. This Burkholderia cenocepacia (strain ATCC BAA-245 / DSM 16553 / LMG 16656 / NCTC 13227 / J2315 / CF5610) (Burkholderia cepacia (strain J2315)) protein is ATP phosphoribosyltransferase regulatory subunit.